The primary structure comprises 328 residues: UPF0285 protein MJ1370 (328 aa).

Belongs to the UPF0285 family.

This Methanocaldococcus jannaschii (strain ATCC 43067 / DSM 2661 / JAL-1 / JCM 10045 / NBRC 100440) (Methanococcus jannaschii) protein is UPF0285 protein MJ1370.